The primary structure comprises 198 residues: Suppressor of cytokine signaling 2 (198 aa).

Residues 1-29 form a disordered region; sequence MTLRCLEPSGNGGEGTRSQWGTAGSAEEP. An interaction with AREL1 region spans residues 1-75; sequence MTLRCLEPSG…PEGTFLIRDS (75 aa). A Phosphoserine modification is found at Ser30. One can recognise an SH2 domain in the interval 48-156; that stretch reads WYWGSMTVNE…TVHLYLTKPL (109 aa). Phosphoserine; by PKC is present on Ser52. The 47-residue stretch at 151–197 folds into the SOCS box domain; the sequence is YLTKPLYTSAPSLQHLCRLTINKCTGAIWGLPLPTRLKDYLEEYKFQ. Residue Lys173 forms a Glycyl lysine isopeptide (Lys-Gly) (interchain with G-Cter in ubiquitin) linkage.

As to quaternary structure, substrate-recognition component of the ECS(SOCS2) complex, composed of SOCS2, CUL5, ELOB, ELOC and RNF7/RBX2. Interacts with IGF1R. Interacts with DCUN1D1. Post-translationally, ubiquitinated; mediated by AREL1 and leading to its subsequent proteasomal degradation. Ubiquitination is dependent on its phosphorylation at Ser-52, by PKC. Ubiquitination is stimulated by LPS. In terms of processing, phosphorylation at Ser-52 by PKC facilitates its ubiquitination and proteasomal degradation. In terms of tissue distribution, high expression in heart, placenta, lung, kidney and prostate. Predominantly expressed in pulmonary epithelia cells, specifically type II pneumocytes.

It localises to the cytoplasm. The protein operates within protein modification; protein ubiquitination. Substrate-binding is prevented by the covalent inhibitor MN551 that cross-links with Cys-111. Also inhibited by a MN551 derivative, MN714, which contains a pivaloyloxymethyl that allows cell permeability. In terms of biological role, substrate-recognition component of a cullin-5-RING E3 ubiquitin-protein ligase complex (ECS complex, also named CRL5 complex), which mediates the ubiquitination and subsequent proteasomal degradation of target proteins, such as EPOR and GHR. Specifically recognizes and binds phosphorylated proteins via its SH2 domain, promoting their ubiquitination. The ECS(SOCS2) complex acts as a key regulator of growth hormone receptor (GHR) levels by mediating ubiquitination and degradation of GHR, following GHR phosphorylation by JAK2. The ECS(SOCS2) also catalyzes ubiquitination and degradation of JAK2-phosphorylated EPOR. This is Suppressor of cytokine signaling 2 from Homo sapiens (Human).